Consider the following 254-residue polypeptide: Diphthine synthase (254 aa).

Residues L11, D87, I90, 115 to 116 (SV), L167, L208, and H233 contribute to the S-adenosyl-L-methionine site.

Belongs to the diphthine synthase family. As to quaternary structure, homodimer.

The enzyme catalyses 2-[(3S)-amino-3-carboxypropyl]-L-histidyl-[translation elongation factor 2] + 3 S-adenosyl-L-methionine = diphthine-[translation elongation factor 2] + 3 S-adenosyl-L-homocysteine + 3 H(+). Its pathway is protein modification; peptidyl-diphthamide biosynthesis. Its function is as follows. S-adenosyl-L-methionine-dependent methyltransferase that catalyzes the trimethylation of the amino group of the modified target histidine residue in translation elongation factor 2 (EF-2), to form an intermediate called diphthine. The three successive methylation reactions represent the second step of diphthamide biosynthesis. This chain is Diphthine synthase, found in Metallosphaera sedula (strain ATCC 51363 / DSM 5348 / JCM 9185 / NBRC 15509 / TH2).